The primary structure comprises 252 residues: Nuclease C1 (252 aa).

The active-site Proton acceptor is His87. Residue Asn119 coordinates Mg(2+).

The protein belongs to the DNA/RNA non-specific endonuclease family. It depends on Mg(2+) as a cofactor. Mn(2+) serves as cofactor.

Its subcellular location is the secreted. Its function is as follows. This enzyme has both RNase and DNase activity. The chain is Nuclease C1 (NUC1CE) from Cunninghamella echinulata var. echinulata.